Reading from the N-terminus, the 403-residue chain is Phosphopentomutase (403 aa).

6 residues coordinate Mn(2+): Asp-13, Asp-298, His-303, Asp-339, His-340, and His-351.

It belongs to the phosphopentomutase family. It depends on Mn(2+) as a cofactor.

It is found in the cytoplasm. The catalysed reaction is 2-deoxy-alpha-D-ribose 1-phosphate = 2-deoxy-D-ribose 5-phosphate. It catalyses the reaction alpha-D-ribose 1-phosphate = D-ribose 5-phosphate. The protein operates within carbohydrate degradation; 2-deoxy-D-ribose 1-phosphate degradation; D-glyceraldehyde 3-phosphate and acetaldehyde from 2-deoxy-alpha-D-ribose 1-phosphate: step 1/2. Its function is as follows. Isomerase that catalyzes the conversion of deoxy-ribose 1-phosphate (dRib-1-P) and ribose 1-phosphate (Rib-1-P) to deoxy-ribose 5-phosphate (dRib-5-P) and ribose 5-phosphate (Rib-5-P), respectively. This Streptococcus pyogenes serotype M28 (strain MGAS6180) protein is Phosphopentomutase.